Reading from the N-terminus, the 609-residue chain is Phosphoenolpyruvate carboxykinase [GTP] (609 aa).

Substrate is bound by residues R81 and 220–222 (YGG). Mn(2+)-binding residues include K229 and H249. S271 is a substrate binding site. 272–277 (ACGKTN) contributes to the GTP binding site. C273 is a catalytic residue. D296 lines the Mn(2+) pocket. A substrate-binding site is contributed by 387-389 (NSR). GTP is bound by residues R389, R420, and 515–518 (FGEN).

The protein belongs to the phosphoenolpyruvate carboxykinase [GTP] family. In terms of assembly, monomer. The cofactor is Mn(2+).

It localises to the cytoplasm. The enzyme catalyses oxaloacetate + GTP = phosphoenolpyruvate + GDP + CO2. Its pathway is carbohydrate biosynthesis; gluconeogenesis. Catalyzes the conversion of oxaloacetate (OAA) to phosphoenolpyruvate (PEP), the rate-limiting step in the metabolic pathway that produces glucose from lactate and other precursors derived from the citric acid cycle. The protein is Phosphoenolpyruvate carboxykinase [GTP] of Mycobacterium leprae (strain Br4923).